A 923-amino-acid polypeptide reads, in one-letter code: Ubiquitin carboxyl-terminal hydrolase 10 (923 aa).

Residues 19–134 (FTPEEEKRIV…GGPPIERKLI (116 aa)) enclose the DUSP domain. The disordered stretch occupies residues 65 to 91 (NECSTGESSEAPRPGPIDNHDIIESDS). The USP domain maps to 304-895 (AGLSNLGNTC…AAYVLFYRRV (592 aa)). Residue Cys313 is the Nucleophile of the active site. Catalysis depends on His853, which acts as the Proton acceptor.

This sequence belongs to the peptidase C19 family.

It carries out the reaction Thiol-dependent hydrolysis of ester, thioester, amide, peptide and isopeptide bonds formed by the C-terminal Gly of ubiquitin (a 76-residue protein attached to proteins as an intracellular targeting signal).. Functionally, recognizes and hydrolyzes the peptide bond at the C-terminal Gly of ubiquitin. Involved in the processing of poly-ubiquitin precursors as well as that of ubiquitinated proteins. This Arabidopsis thaliana (Mouse-ear cress) protein is Ubiquitin carboxyl-terminal hydrolase 10 (UBP10).